The primary structure comprises 238 residues: Ribonuclease PH (238 aa).

Residues arginine 86 and 124 to 126 (GTR) contribute to the phosphate site.

Belongs to the RNase PH family. Homohexameric ring arranged as a trimer of dimers.

The catalysed reaction is tRNA(n+1) + phosphate = tRNA(n) + a ribonucleoside 5'-diphosphate. Phosphorolytic 3'-5' exoribonuclease that plays an important role in tRNA 3'-end maturation. Removes nucleotide residues following the 3'-CCA terminus of tRNAs; can also add nucleotides to the ends of RNA molecules by using nucleoside diphosphates as substrates, but this may not be physiologically important. Probably plays a role in initiation of 16S rRNA degradation (leading to ribosome degradation) during starvation. This chain is Ribonuclease PH, found in Salmonella agona (strain SL483).